We begin with the raw amino-acid sequence, 314 residues long: Fibrinogen-like protein 1 (314 aa).

A signal peptide spans 1–22; the sequence is MGKIYSFVLVAIALMMGREGWA. A coiled-coil region spans residues 28-62; that stretch reads CLREQVRLRAQVHQLETRVKQQQTMIAQLLHEKEV. The region spanning 76-308 is the Fibrinogen C-terminal domain; sequence LGGKRQYADC…SVVMKIRPSD (233 aa). Cystine bridges form between cysteine 85-cysteine 114 and cysteine 250-cysteine 263.

Homodimer. Interacts (via the Fibrinogen C-terminal domain) with LAG3 (via Ig-like domains 1 and 2). In terms of tissue distribution, mainly expressed in liver. Also expressed in brown adipose tissue.

It localises to the secreted. Functionally, immune suppressive molecule that inhibits antigen-specific T-cell activation by acting as a major ligand of LAG3. Responsible for LAG3 T-cell inhibitory function. Binds LAG3 independently from MHC class II (MHC-II). Secreted by, and promotes growth of, hepatocytes. The polypeptide is Fibrinogen-like protein 1 (Fgl1) (Mus musculus (Mouse)).